The following is a 409-amino-acid chain: Tryptophan synthase beta chain (409 aa).

Residue K92 is modified to N6-(pyridoxal phosphate)lysine.

The protein belongs to the TrpB family. In terms of assembly, tetramer of two alpha and two beta chains. Pyridoxal 5'-phosphate serves as cofactor.

It catalyses the reaction (1S,2R)-1-C-(indol-3-yl)glycerol 3-phosphate + L-serine = D-glyceraldehyde 3-phosphate + L-tryptophan + H2O. It participates in amino-acid biosynthesis; L-tryptophan biosynthesis; L-tryptophan from chorismate: step 5/5. Functionally, the beta subunit is responsible for the synthesis of L-tryptophan from indole and L-serine. The chain is Tryptophan synthase beta chain (trpB) from Methanococcus voltae.